The chain runs to 381 residues: cAMP-dependent protein kinase type I-beta regulatory subunit (381 aa).

The segment at 1-136 (MASPSCFHSE…ALAKAISKNV (136 aa)) is dimerization and phosphorylation. Ser-3 carries the post-translational modification Phosphoserine. Residue Tyr-21 is modified to 3'-nitrotyrosine. The segment at 66 to 88 (LARQKSNSQCDSHDEEISPTPPN) is disordered. Phosphoserine occurs at positions 77 and 83. The residue at position 85 (Thr-85) is a Phosphothreonine. The Pseudophosphorylation motif signature appears at 96–100 (RRGGV). Arg-97 carries the post-translational modification Omega-N-methylarginine. 3',5'-cyclic AMP-binding positions include 137–254 (LFSH…SKVS), Glu-202, Arg-211, 255–381 (ILES…SLTV), Glu-326, and Arg-335.

The protein belongs to the cAMP-dependent kinase regulatory chain family. In terms of assembly, the inactive holoenzyme is composed of two regulatory chains and two catalytic chains. Activation by cAMP releases the two active catalytic monomers and the regulatory dimer. Interacts with PRKX; regulates this cAMP-dependent protein kinase. Interacts with smAKAP; this interaction may target PRKAR1B to the plasma membrane. The pseudophosphorylation site binds to the substrate-binding region of the catalytic chain, resulting in the inhibition of its activity. In terms of tissue distribution, abundant in brain and testis. No expression in lung, heart, liver, spleen, kidney and skeletal muscle.

It is found in the cell membrane. In terms of biological role, regulatory subunit of the cAMP-dependent protein kinases involved in cAMP signaling in cells. In Rattus norvegicus (Rat), this protein is cAMP-dependent protein kinase type I-beta regulatory subunit (Prkar1b).